A 115-amino-acid polypeptide reads, in one-letter code: NADH-ubiquinone oxidoreductase chain 3 (115 aa).

3 consecutive transmembrane segments (helical) span residues 4–24 (LMAL…AFWL), 55–75 (FFLV…LLPL), and 86–106 (TMML…AYEW).

Belongs to the complex I subunit 3 family. As to quaternary structure, core subunit of respiratory chain NADH dehydrogenase (Complex I) which is composed of 45 different subunits. Interacts with TMEM186. Interacts with TMEM242.

It is found in the mitochondrion inner membrane. It carries out the reaction a ubiquinone + NADH + 5 H(+)(in) = a ubiquinol + NAD(+) + 4 H(+)(out). Core subunit of the mitochondrial membrane respiratory chain NADH dehydrogenase (Complex I) which catalyzes electron transfer from NADH through the respiratory chain, using ubiquinone as an electron acceptor. Essential for the catalytic activity of complex I. This chain is NADH-ubiquinone oxidoreductase chain 3, found in Peromyscus gossypinus (Cotton deermouse).